The chain runs to 569 residues: Dihydroorotate dehydrogenase (quinone), mitochondrial (569 aa).

The N-terminal 23 residues, 1-23 (MISKLKPQFMFLPKKHILSYCRK), are a transit peptide targeting the mitochondrion. The chain crosses the membrane as a helical span at residues 143–163 (IIFLLFVSLFGLYGFFESYNP). Residues 225 to 229 (AGFDK) and Thr-249 contribute to the FMN site. Residue Lys-229 coordinates substrate. Substrate contacts are provided by residues 274-278 (NSCGF) and Asn-342. Residue Asn-342 coordinates FMN. Catalysis depends on Ser-345, which acts as the Nucleophile. Residue Asn-347 coordinates substrate. Lys-429 is a binding site for FMN. A substrate-binding site is contributed by 458 to 459 (NT). FMN contacts are provided by residues 477-478 (SG), 505-507 (SGG), and 528-529 (YS).

Belongs to the dihydroorotate dehydrogenase family. Type 2 subfamily. Monomer. The cofactor is FMN.

Its subcellular location is the mitochondrion inner membrane. It carries out the reaction (S)-dihydroorotate + a quinone = orotate + a quinol. The protein operates within pyrimidine metabolism; UMP biosynthesis via de novo pathway; orotate from (S)-dihydroorotate (quinone route): step 1/1. Catalyzes the conversion of dihydroorotate to orotate with quinone as electron acceptor. This Plasmodium falciparum (isolate 3D7) protein is Dihydroorotate dehydrogenase (quinone), mitochondrial.